The sequence spans 496 residues: COP9 signalosome complex subunit 3 (496 aa).

A PCI domain is found at Gln243–Phe411. A disordered region spans residues Gly468 to Arg496. Over residues Gly483–Arg496 the composition is skewed to acidic residues.

The protein belongs to the CSN3 family. In terms of assembly, component of the COP9 signalosome (CSN) complex.

The protein resides in the cytoplasm. It localises to the nucleus. Its function is as follows. Component of the COP9 signalosome (CSN) complex that acts as an regulator of the ubiquitin (Ubl) conjugation pathway by mediating the deneddylation of the cullin subunit of SCF-type E3 ubiquitin-protein ligase complexes. The CSN complex seems to link protein degradation to sexual development. The chain is COP9 signalosome complex subunit 3 (csnC) from Emericella nidulans (strain FGSC A4 / ATCC 38163 / CBS 112.46 / NRRL 194 / M139) (Aspergillus nidulans).